A 551-amino-acid chain; its full sequence is Chaperonin GroEL 2 (551 aa).

Residues 30-33 (TLGP), Lys-51, 87-91 (DGTTT), Gly-415, and Asp-496 contribute to the ATP site.

The protein belongs to the chaperonin (HSP60) family. Forms a cylinder of 14 subunits composed of two heptameric rings stacked back-to-back. Interacts with the co-chaperonin GroES.

Its subcellular location is the cytoplasm. It carries out the reaction ATP + H2O + a folded polypeptide = ADP + phosphate + an unfolded polypeptide.. Together with its co-chaperonin GroES, plays an essential role in assisting protein folding. The GroEL-GroES system forms a nano-cage that allows encapsulation of the non-native substrate proteins and provides a physical environment optimized to promote and accelerate protein folding. This chain is Chaperonin GroEL 2, found in Rhodopseudomonas palustris (strain BisB18).